A 517-amino-acid chain; its full sequence is Protein AGENET DOMAIN (AGD)-CONTAINING P1 (517 aa).

Positions 1 to 35 (MLRPRRSLGVSSPAKQRKKAAPKNSMATRANRKRL) are disordered. Plant Agenet, chromatin-binding stretches follow at residues 37–111 (SYLK…PPMS) and 117–173 (KKIV…EWVD). A disordered region spans residues 177–202 (KPPLEETEEEEDESEEDKLDDSEDEE). A compositionally biased stretch (acidic residues) spans 181 to 202 (EETEEEEDESEEDKLDDSEDEE). Plant Agenet, chromatin-binding stretches follow at residues 219-287 (QMFS…PRDE), 289-345 (IDFA…DWVD), 378-446 (QAFS…LESV), and 449-505 (SPFE…EWID).

Expressed ubiquitously during vegetative stage, in meristems (e.g. root tips and shoot apical meristem), and in ovules and young seeds during reproductive stage.

Its subcellular location is the nucleus. In terms of biological role, heterochromatin-binding protein that preferentially occupies long transposons and specifically recognizes the histone H3 'Lys-9' methylation (H3K9me) marks, with a stronger affinity for dimethylated H3K9 (H3K9me2). Required for transcriptional silencing, non-CG DNA methylation (e.g. CHG and CHH regions), and H3K9 dimethylation (H3K9me2) at some loci. Mediates heterochromatin phase separation and chromocenter formation. The polypeptide is Protein AGENET DOMAIN (AGD)-CONTAINING P1 (Arabidopsis thaliana (Mouse-ear cress)).